Consider the following 59-residue polypeptide: uncharacterized protein (59 aa).

Residues 7-24 (FLLVFIILAQLLSCTPSA) form a helical membrane-spanning segment.

The protein resides in the membrane. This is an uncharacterized protein from Rickettsia prowazekii (strain Madrid E).